The following is a 27-amino-acid chain: Cupiennin-4a (27 aa).

E27 bears the Glutamic acid 1-amide mark.

Expressed by the venom gland.

The protein resides in the secreted. The chain is Cupiennin-4a from Cupiennius salei (American wandering spider).